A 254-amino-acid chain; its full sequence is MAGHSKFKNIMHRKGAQDKKRSAMFSKLSREITVAAKMGMPDPDMNPRLRAAINAAKAQSMPKDNIARAIDKASKGEGDNYEEVRYEGYGPGGVAIIVEALTDNRNRTATNVRTAFAKNGGNLGASGAVSHGFERLGLIEYPGKVGDEEKVLEAAIEAGAEDVESDMGDGDENPGSHQIWVAVESLHEVARELEKTLGEAEGVKLAWKPSMKTSVDADNAATLLKLIDVLEDDDDVQTVWGNYDIPDDVMETLG.

Residues 1 to 14 (MAGHSKFKNIMHRK) show a composition bias toward basic residues. Residues 1-22 (MAGHSKFKNIMHRKGAQDKKRS) are disordered.

The protein belongs to the TACO1 family.

The protein resides in the cytoplasm. The sequence is that of Probable transcriptional regulatory protein Saro_0419 from Novosphingobium aromaticivorans (strain ATCC 700278 / DSM 12444 / CCUG 56034 / CIP 105152 / NBRC 16084 / F199).